Consider the following 308-residue polypeptide: tRNA dimethylallyltransferase (308 aa).

Position 10–17 (Gly-10–Thr-17) interacts with ATP. Residue Thr-12–Thr-17 coordinates substrate. 2 interaction with substrate tRNA regions span residues Asp-35–Leu-38 and Gln-159–Arg-163.

This sequence belongs to the IPP transferase family. As to quaternary structure, monomer. It depends on Mg(2+) as a cofactor.

The catalysed reaction is adenosine(37) in tRNA + dimethylallyl diphosphate = N(6)-dimethylallyladenosine(37) in tRNA + diphosphate. In terms of biological role, catalyzes the transfer of a dimethylallyl group onto the adenine at position 37 in tRNAs that read codons beginning with uridine, leading to the formation of N6-(dimethylallyl)adenosine (i(6)A). The polypeptide is tRNA dimethylallyltransferase (Francisella tularensis subsp. tularensis (strain FSC 198)).